The chain runs to 185 residues: Ribosome-recycling factor (185 aa).

Belongs to the RRF family.

The protein resides in the cytoplasm. Responsible for the release of ribosomes from messenger RNA at the termination of protein biosynthesis. May increase the efficiency of translation by recycling ribosomes from one round of translation to another. This is Ribosome-recycling factor from Haemophilus influenzae (strain 86-028NP).